Reading from the N-terminus, the 121-residue chain is UPF0102 protein HRM2_30940 (121 aa).

It belongs to the UPF0102 family.

This Desulforapulum autotrophicum (strain ATCC 43914 / DSM 3382 / VKM B-1955 / HRM2) (Desulfobacterium autotrophicum) protein is UPF0102 protein HRM2_30940.